Here is a 69-residue protein sequence, read N- to C-terminus: DNA-directed RNA polymerase subunit epsilon (69 aa).

The protein belongs to the RNA polymerase subunit epsilon family. RNAP is composed of a core of 2 alpha, a beta and a beta' subunit. The core is associated with a delta subunit, and at least one of epsilon or omega. When a sigma factor is associated with the core the holoenzyme is formed, which can initiate transcription.

The enzyme catalyses RNA(n) + a ribonucleoside 5'-triphosphate = RNA(n+1) + diphosphate. A non-essential component of RNA polymerase (RNAP). The chain is DNA-directed RNA polymerase subunit epsilon from Geobacillus sp. (strain WCH70).